We begin with the raw amino-acid sequence, 105 residues long: MAFKHISIAQTLELLDKEDVVIADIRDPNSYQAGHIPGSEALSNANIAHFMMEKEFDQPIIIVCYHGMSSQGAASYLVEQGFEDVYSMDGGFTAWEAAYSEKVER.

One can recognise a Rhodanese domain in the interval 16–104; sequence DKEDVVIADI…WEAAYSEKVE (89 aa). The active-site Cysteine persulfide intermediate is C64.

This sequence belongs to the GlpE family.

The protein resides in the cytoplasm. It catalyses the reaction thiosulfate + hydrogen cyanide = thiocyanate + sulfite + 2 H(+). The catalysed reaction is thiosulfate + [thioredoxin]-dithiol = [thioredoxin]-disulfide + hydrogen sulfide + sulfite + 2 H(+). Transferase that catalyzes the transfer of sulfur from thiosulfate to thiophilic acceptors such as cyanide or dithiols. May function in a CysM-independent thiosulfate assimilation pathway by catalyzing the conversion of thiosulfate to sulfite, which can then be used for L-cysteine biosynthesis. In Pseudoalteromonas translucida (strain TAC 125), this protein is Thiosulfate sulfurtransferase GlpE.